The chain runs to 233 residues: Ribonuclease 3 (233 aa).

Residues 7–136 enclose the RNase III domain; that stretch reads KQYLLSEFNI…FIGALYLDQG (130 aa). Glu-49 serves as a coordination point for Mg(2+). Asp-53 is a catalytic residue. 2 residues coordinate Mg(2+): Asp-122 and Glu-125. Glu-125 is an active-site residue. The DRBM domain occupies 162–232; the sequence is DFKSRLQEKL…ARAALKLLEE (71 aa).

It belongs to the ribonuclease III family. In terms of assembly, homodimer. The cofactor is Mg(2+).

The protein localises to the cytoplasm. The enzyme catalyses Endonucleolytic cleavage to 5'-phosphomonoester.. Its function is as follows. Digests double-stranded RNA. Involved in the processing of primary rRNA transcript to yield the immediate precursors to the large and small rRNAs (23S and 16S). Processes some mRNAs, and tRNAs when they are encoded in the rRNA operon. Processes pre-crRNA and tracrRNA of type II CRISPR loci if present in the organism. This chain is Ribonuclease 3, found in Leuconostoc citreum (strain KM20).